A 2059-amino-acid chain; its full sequence is Non-reducing polyketide synthase stmB (2059 aa).

Residues 7 to 243 enclose the Starter acyltransferase (SAT) domain; that stretch reads LLFGDQTVEL…LKLAAYGAVH (237 aa). Residues 366 to 796 form the Ketosynthase family 3 (KS3) domain; that stretch reads SNSIAIVGMA…GGNSCLILEE (431 aa). Catalysis depends on for beta-ketoacyl synthase activity residues Cys-538, His-673, and His-713. A Malonyl-CoA:ACP transacylase (MAT) domain is found at 895–1185; the sequence is WVFSGQGSQY…CGSMVKATLG (291 aa). The segment at 1273–1413 is N-terminal hotdog fold; the sequence is LHFVKKETVT…SASEWTDEWS (141 aa). Residues 1273–1581 enclose the PKS/mFAS DH domain; that stretch reads LHFVKKETVT…FQRMPRMVLH (309 aa). His-1306 (proton acceptor; for dehydratase activity) is an active-site residue. The tract at residues 1435–1581 is C-terminal hotdog fold; it reads GDHLRRPVVY…FQRMPRMVLH (147 aa). The active-site Proton donor; for dehydratase activity is Asp-1495. Residues 1619-1696 enclose the Carrier domain; sequence PPKHDLADQL…DARRALGGDE (78 aa). Ser-1656 is subject to O-(pantetheine 4'-phosphoryl)serine. The interval 1693–1727 is disordered; it reads GGDETASESENDAEGDAPSDGGSPSGSWTPISPPE. Residues 1697-1709 show a composition bias toward acidic residues; the sequence is TASESENDAEGDA. Low complexity predominate over residues 1710–1719; it reads PSDGGSPSGS. Residues 1778–2059 are thioesterase (TE) domain; the sequence is AVEYKSNVVL…LGKLLQEAVA (282 aa).

Pantetheine 4'-phosphate serves as cofactor.

It participates in mycotoxin biosynthesis. In terms of biological role, non-reducing polyketide synthase; part of the gene cluster that mediates the biosynthesis of stromemycin, a depside C-glucoside with two unsaturated C9 side chains belonging to aromatic polyketide glycosides. The HR-PKS stmA and the NR-PKS stmB act as scaffold-generating enzymes responsible for the biosynthesis of the polyketide skeleton bininalkenylresorcylic acid. StmA condenses on acetyl-CoA starter unit with 4 malonyl-CoA units and the stmB uses 3 more malonyl-CoA units and catalyzes the depside bond formation. The glycoytransferase stmC then acts as the tailoring enzyme responsible for 3-C-glucosylation of bininalkenylresorcylic acid to yield stromemycin. The polypeptide is Non-reducing polyketide synthase stmB (Aspergillus ustus).